Reading from the N-terminus, the 151-residue chain is Probable cGMP 3',5'-cyclic phosphodiesterase subunit delta (151 aa).

This sequence belongs to the PDE6D/unc-119 family. Interacts with Pde6.

The protein localises to the nucleus. The protein resides in the cytoplasm. This is Probable cGMP 3',5'-cyclic phosphodiesterase subunit delta from Drosophila willistoni (Fruit fly).